We begin with the raw amino-acid sequence, 418 residues long: Acyltransferase calJ (418 aa).

Residue Ser-79 is the Acyl-ester intermediate of the active site. Arg-176 and Tyr-191 together coordinate substrate.

This sequence belongs to the class-A beta-lactamase family.

The protein operates within secondary metabolite biosynthesis. In terms of biological role, acyltransferase; part of the gene cluster that mediates the biosynthesis of calbistrin A and related compounds. Calbistrin A is a secondary metabolite with an interesting structure that was recently found to have bioactivity against leukemia cells. It consists of two polyketides linked by an ester bond: a bicyclic decalin containing polyketide and a linear 12 carbon dioic acid structure. The polyketide synthase calA is probably responsible for forming the decalin moiety. Because calA lacks a designated enoylreductase (ER) domain, the required activity is provided by the trans-enoyl reductase calK. Following release from the PKS, calF then probably catalyzes the oxidation and the subsequent Diels Alder cycloisomerization that lead to the formation of the decalin moiety. The decalin polyketide backbone includes two C-methyl groups, at C7 and C11 in backbone, of which the C7 position is probably methylated by the methyltransferase domain of calA. A candidate for adding the methyl group at C11, if not done by CalA, is the cluster methyltransferase calH. Several additional tailoring enzymes within the cluster could be involved in the modification of the decalin polyketide product. Those include the 3 cytochrome P450 monooxygenases CalE, CalG and CalL, of which one might be responsible for the introduction of the extra hydroxyl group attached to the backbone of the decalin moiety, at position C9 in the backbone, that allows for attachment of the linear moiety. One tailoring enzyme activity that is expected to be involved in biosynthesis of calbistrin is an acyltransferase for connecting the two polyketide synthase products, and which could be performed by the cluster acyltransferase calJ. The enzyme responsible for the biosynthesis of the linear moiety, probably a second PKS, has not been identified yet. The chain is Acyltransferase calJ from Penicillium decumbens.